We begin with the raw amino-acid sequence, 349 residues long: Protein Wnt-7b (349 aa).

The N-terminal stretch at 1-24 (MHRNFRKWIFYVFLCFGVIYVKLG) is a signal peptide. 5 disulfide bridges follow: Cys73–Cys84, Cys123–Cys131, Cys133–Cys152, Cys200–Cys214, and Cys202–Cys209. Asn83 and Asn127 each carry an N-linked (GlcNAc...) asparagine glycan. Ser206 is lipidated: O-palmitoleoyl serine; by PORCN. The interval 238–266 (VEVVRASRLRQPTFLKIKQIKSYQKPMET) is disordered linker. Disulfide bonds link Cys278-Cys309, Cys294-Cys304, Cys308-Cys348, Cys324-Cys339, Cys326-Cys336, and Cys331-Cys332. N-linked (GlcNAc...) asparagine glycosylation is present at Asn295.

Belongs to the Wnt family. Palmitoleoylation is required for efficient binding to frizzled receptors. Depalmitoleoylation leads to Wnt signaling pathway inhibition. In terms of tissue distribution, expressed in differentiating lens fiber cells.

The protein localises to the secreted. It is found in the extracellular space. It localises to the extracellular matrix. In terms of biological role, ligand for members of the frizzled family of seven transmembrane receptors that functions in the canonical Wnt/beta-catenin signaling pathway. Required for normal fusion of the chorion and the allantois during placenta development. Required for central nervous system (CNS) angiogenesis and blood-brain barrier regulation. This chain is Protein Wnt-7b (WNT7B), found in Gallus gallus (Chicken).